A 139-amino-acid chain; its full sequence is uncharacterized protein (139 aa).

This is an uncharacterized protein from Galliformes (FAdV-1).